The sequence spans 158 residues: Phosphopantetheine adenylyltransferase (158 aa).

Substrate is bound at residue S9. ATP is bound by residues 9–10 (SF) and H17. Positions 41, 73, and 87 each coordinate substrate. ATP-binding positions include 88-90 (GLR), E98, and 122-128 (YSFVSSS).

This sequence belongs to the bacterial CoaD family. As to quaternary structure, homohexamer. The cofactor is Mg(2+).

It is found in the cytoplasm. The enzyme catalyses (R)-4'-phosphopantetheine + ATP + H(+) = 3'-dephospho-CoA + diphosphate. Its pathway is cofactor biosynthesis; coenzyme A biosynthesis; CoA from (R)-pantothenate: step 4/5. Reversibly transfers an adenylyl group from ATP to 4'-phosphopantetheine, yielding dephospho-CoA (dPCoA) and pyrophosphate. The polypeptide is Phosphopantetheine adenylyltransferase (Mycolicibacterium smegmatis (strain ATCC 700084 / mc(2)155) (Mycobacterium smegmatis)).